The following is a 33-amino-acid chain: Alpha-amanitin proprotein 2 (33 aa).

A propeptide spanning residues 1–10 (MSDINATRLP) is cleaved from the precursor. Position 11 is a (3R,4R)-4,5-dihydroxyisoleucine; in form alpha-amanitin (Ile-11). Residue Ile-11 is modified to (3R,4S)-4-hydroxyisoleucine; in form gamma-amanitin. The cyclopeptide (Ile-Pro) cross-link spans 11-18 (IWGIGCNP). A cross-link (2'-cysteinyl-6'-hydroxytryptophan sulfoxide (Trp-Cys)) is located at residues 12–16 (WGIGC). Pro-18 is modified (4-hydroxyproline). Residues 19–33 (CVGDDVTSVLTRGEA) constitute a propeptide that is removed on maturation.

Belongs to the MSDIN fungal toxin family. Processed by the macrocyclase-peptidase enzyme POPB to yield a toxic cyclic octapeptide. POPB first removes 10 residues from the N-terminus. Conformational trapping of the remaining peptide forces the enzyme to release this intermediate rather than proceed to macrocyclization. The enzyme rebinds the remaining peptide in a different conformation and catalyzes macrocyclization of the N-terminal 8 residues. As to expression, expressed in basidiocarps.

Its function is as follows. Major toxin belonging to the bicyclic octapeptides amatoxins that acts by binding non-competitively to RNA polymerase II and greatly slowing the elongation of transcripts from target promoters. This Amanita exitialis (Guangzhou destroying angel) protein is Alpha-amanitin proprotein 2.